A 284-amino-acid polypeptide reads, in one-letter code: Bifunctional protein FolD (284 aa).

NADP(+) is bound by residues 166–168 and isoleucine 232; that span reads GAS.

This sequence belongs to the tetrahydrofolate dehydrogenase/cyclohydrolase family. In terms of assembly, homodimer.

The enzyme catalyses (6R)-5,10-methylene-5,6,7,8-tetrahydrofolate + NADP(+) = (6R)-5,10-methenyltetrahydrofolate + NADPH. It carries out the reaction (6R)-5,10-methenyltetrahydrofolate + H2O = (6R)-10-formyltetrahydrofolate + H(+). The protein operates within one-carbon metabolism; tetrahydrofolate interconversion. Catalyzes the oxidation of 5,10-methylenetetrahydrofolate to 5,10-methenyltetrahydrofolate and then the hydrolysis of 5,10-methenyltetrahydrofolate to 10-formyltetrahydrofolate. The sequence is that of Bifunctional protein FolD from Pseudomonas fluorescens (strain ATCC BAA-477 / NRRL B-23932 / Pf-5).